The sequence spans 663 residues: MFGKLSLDAVPFHEPIVMVTIAGIILGGLALVGLITYFGKWTYLWKEWLTSVDHKRLGIMYIIVAIVMLLRGFADAIMMRSQQALASAGEAGFLPPHHYDQIFTAHGVIMIFFVAMPFVIGLMNLVVPLQIGARDVAFPFLNNLSFWFTVVGVILVNVSLGVGEFAQTGWLAYPPLSGIEYSPGVGVDYWIWSLQLSGIGTTLTGINFFVTILKMRAPGMTMFKMPVFTWASLCANVLIIASFPILTVTVALLTLDRYLGTHFFTNDMGGNMMMYINLIWAWGHPEVYILILPVFGVFSEIAATFSRKRLFGYTSLVWATVCITVLSFIVWLHHFFTMGAGANVNAFFGITTMIIAIPTGVKIFNWLFTMYQGRIVFHSAMLWTIGFIVTFSVGGMTGVLLAVPGADFVLHNSLFLIAHFHNVIIGGVVFGCFAGMTYWWPKAFGFKLNETWGKRAFWFWIIGFFVAFMPLYALGFMGMTRRLSQQIDPQFHTMLMIAASGAVLIALGILCLVIQMYVSIRDRDQNRDLTGDPWGGRTLEWATSSPPPFYNFAVVPHVHERDAFWEMKEKGEAYKKPDHYEEIHMPKNSGAGIVIAAFSTIFGFAMIWHIWWLAIVGFAGMIITWIVKSFDEDVDYYVPVAEIEKLENQHFDEITKAGLKNGN.

Topologically, residues 1–16 (MFGKLSLDAVPFHEPI) are periplasmic. Residues 17-35 (VMVTIAGIILGGLALVGLI) form a helical membrane-spanning segment. The Cytoplasmic segment spans residues 36–52 (TYFGKWTYLWKEWLTSV). Residues 53 to 80 (DHKRLGIMYIIVAIVMLLRGFADAIMMR) traverse the membrane as a helical segment. Ubiquinone-8 is bound by residues Arg-71 and Asp-75. Residues 81–95 (SQQALASAGEAGFLP) lie on the Periplasmic side of the membrane. A helical membrane pass occupies residues 96-132 (PHHYDQIFTAHGVIMIFFVAMPFVIGLMNLVVPLQIG). His-98 serves as a coordination point for ubiquinone-8. His-106 contributes to the heme b binding site. The Cytoplasmic segment spans residues 133 to 137 (ARDVA). A helical membrane pass occupies residues 138–161 (FPFLNNLSFWFTVVGVILVNVSLG). Residues 162–184 (VGEFAQTGWLAYPPLSGIEYSPG) lie on the Periplasmic side of the membrane. Trp-170 is a binding site for heme b. The chain crosses the membrane as a helical span at residues 185-215 (VGVDYWIWSLQLSGIGTTLTGINFFVTILKM). At 216-224 (RAPGMTMFK) the chain is on the cytoplasmic side. Residues 225–260 (MPVFTWASLCANVLIIASFPILTVTVALLTLDRYLG) traverse the membrane as a helical segment. Residues 261-270 (THFFTNDMGG) are Periplasmic-facing. A helical membrane pass occupies residues 271–307 (NMMMYINLIWAWGHPEVYILILPVFGVFSEIAATFSR). His-284 serves as a coordination point for Cu(2+). The segment at residues 284–288 (HPEVY) is a cross-link (1'-histidyl-3'-tyrosine (His-Tyr)). A Fe(II)-heme o-binding site is contributed by Tyr-288. Residues 308-311 (KRLF) are Cytoplasmic-facing. A helical transmembrane segment spans residues 312–326 (GYTSLVWATVCITVL). Over 327 to 340 (SFIVWLHHFFTMGA) the chain is Periplasmic. Residues His-333 and His-334 each coordinate Cu(2+). A helical membrane pass occupies residues 341–369 (GANVNAFFGITTMIIAIPTGVKIFNWLFT). The Cytoplasmic portion of the chain corresponds to 370–377 (MYQGRIVF). Residues 378-409 (HSAMLWTIGFIVTFSVGGMTGVLLAVPGADFV) traverse the membrane as a helical segment. The Periplasmic segment spans residues 410–412 (LHN). Fe(II)-heme o contacts are provided by His-411 and His-419. Residues 413-445 (SLFLIAHFHNVIIGGVVFGCFAGMTYWWPKAFG) traverse the membrane as a helical segment. Residue His-421 participates in heme b binding. The Cytoplasmic segment spans residues 446 to 448 (FKL). Residues 449–477 (NETWGKRAFWFWIIGFFVAFMPLYALGFM) form a helical membrane-spanning segment. Topologically, residues 478-489 (GMTRRLSQQIDP) are periplasmic. Heme b is bound by residues Arg-481 and Arg-482. The helical transmembrane segment at 490–521 (QFHTMLMIAASGAVLIALGILCLVIQMYVSIR) threads the bilayer. The Cytoplasmic portion of the chain corresponds to 522–587 (DRDQNRDLTG…DHYEEIHMPK (66 aa)). Residues 588 to 606 (NSGAGIVIAAFSTIFGFAM) form a helical membrane-spanning segment. Residues 607–613 (IWHIWWL) lie on the Periplasmic side of the membrane. The helical transmembrane segment at 614-632 (AIVGFAGMIITWIVKSFDE) threads the bilayer. Residues 633 to 663 (DVDYYVPVAEIEKLENQHFDEITKAGLKNGN) lie on the Cytoplasmic side of the membrane.

Belongs to the heme-copper respiratory oxidase family. As to quaternary structure, the cytochrome bo(3) ubiquinol oxidase complex is a heterooctamer of two A chains, two B chains, two C chains and two D chains. The cofactor is Cu(2+). Heme b serves as cofactor. It depends on Fe(II)-heme o as a cofactor.

The protein resides in the cell inner membrane. It catalyses the reaction 2 a ubiquinol + O2 + n H(+)(in) = 2 a ubiquinone + 2 H2O + n H(+)(out). Functionally, cytochrome bo(3) ubiquinol oxidase is the terminal enzyme in the aerobic respiratory chain of E.coli that predominates when cells are grown at high aeration. Catalyzes the four-electron reduction of O2 to water, using a ubiquinol as a membrane soluble electron donor for molecular oxygen reduction; ubiquinol-8 is the natural substrate for E.coli. Has proton pump activity across the membrane in addition to electron transfer, pumping 2 protons/electron and generating a proton motive force. All the redox centers of this enzyme complex are located within the largest subunit, subunit I. Protons are probably pumped via D- and K- channels found in this subunit. This Escherichia coli O157:H7 protein is Cytochrome bo(3) ubiquinol oxidase subunit 1 (cyoB).